We begin with the raw amino-acid sequence, 194 residues long: Ion-translocating oxidoreductase complex subunit B (194 aa).

The tract at residues 1 to 26 (MSSILIAVIAIAALALVFGLILGFAS) is hydrophobic. The region spanning 32–90 (ESDPIVEQIDAILPQTQCGQCGYPGCKPYAEAIANGDMINKCPPGGQATIEKLADLMGV) is the 4Fe-4S domain. Residues Cys-49, Cys-52, Cys-57, Cys-73, Cys-114, Cys-117, Cys-120, Cys-124, Cys-144, Cys-147, Cys-150, and Cys-154 each contribute to the [4Fe-4S] cluster site. 2 consecutive 4Fe-4S ferredoxin-type domains span residues 105 to 134 (KVAFIHEDMCIGCTKCIQACPVDAIVGGTK) and 135 to 164 (ALHTVIESECTGCDLCVAPCPTDCIEMIPV).

Belongs to the 4Fe4S bacterial-type ferredoxin family. RnfB subfamily. As to quaternary structure, the complex is composed of six subunits: RnfA, RnfB, RnfC, RnfD, RnfE and RnfG. It depends on [4Fe-4S] cluster as a cofactor.

The protein localises to the cell inner membrane. Part of a membrane-bound complex that couples electron transfer with translocation of ions across the membrane. In Aliivibrio fischeri (strain ATCC 700601 / ES114) (Vibrio fischeri), this protein is Ion-translocating oxidoreductase complex subunit B.